A 286-amino-acid chain; its full sequence is 3-methyl-2-oxobutanoate hydroxymethyltransferase (286 aa).

Residues Asp-51 and Asp-90 each coordinate Mg(2+). 3-methyl-2-oxobutanoate is bound by residues 51–52 (DS), Asp-90, and Lys-120. Residue Glu-122 coordinates Mg(2+). The active-site Proton acceptor is Glu-189. The disordered stretch occupies residues 263–286 (TFPGPSHVFSGSKASSDLNGGDES).

Belongs to the PanB family. In terms of assembly, homodecamer; pentamer of dimers. Requires Mg(2+) as cofactor.

It localises to the cytoplasm. The enzyme catalyses 3-methyl-2-oxobutanoate + (6R)-5,10-methylene-5,6,7,8-tetrahydrofolate + H2O = 2-dehydropantoate + (6S)-5,6,7,8-tetrahydrofolate. Its pathway is cofactor biosynthesis; (R)-pantothenate biosynthesis; (R)-pantoate from 3-methyl-2-oxobutanoate: step 1/2. Functionally, catalyzes the reversible reaction in which hydroxymethyl group from 5,10-methylenetetrahydrofolate is transferred onto alpha-ketoisovalerate to form ketopantoate. The sequence is that of 3-methyl-2-oxobutanoate hydroxymethyltransferase from Mesorhizobium japonicum (strain LMG 29417 / CECT 9101 / MAFF 303099) (Mesorhizobium loti (strain MAFF 303099)).